A 346-amino-acid chain; its full sequence is Integrin beta-1-binding protein 2 (346 aa).

Zn(2+)-binding residues include cysteine 5, cysteine 10, cysteine 24, and histidine 27. The CHORD 1 domain occupies 5–64 (CHNKGCGQHFDPQTNLPDSCCHHPGVPVFHDALKGWSCCRKRTVDFSEFLNIKGCTVGPH). The short motif at 28-31 (PGVP) is the SH3-binding element. Positions 42, 43, 59, and 64 each coordinate Zn(2+). Residues 70 to 78 (PEAPQPEGP) carry the SH3-binding motif. The segment at 70-113 (PEAPQPEGPATSSSLLEQKPPNTIPKSAETLRRERPKSDLPPKL) is disordered. Over residues 79–94 (ATSSSLLEQKPPNTIP) the composition is skewed to polar residues. The segment covering 98–109 (ETLRRERPKSDL) has biased composition (basic and acidic residues). Positions 150 and 155 each coordinate Zn(2+). The 60-residue stretch at 150 to 209 (CQNPGCDAVYQGSESDATPCTYHPGAPRFHEGMKSWSCCGIQTLDFGVFLAQPGCRVGRH) folds into the CHORD 2 domain. The SH2-binding motif lies at 159–162 (YQGS). Zn(2+) contacts are provided by cysteine 169 and histidine 172. The short motif at 173–176 (PGAP) is the SH3-binding element. Zn(2+)-binding residues include cysteine 187, cysteine 188, cysteine 204, and histidine 209. Residues 216 to 305 (LASCRHDWHQ…ADPGFWAQLE (90 aa)) enclose the CS domain. The SH2-binding motif lies at 235–238 (YGQI). The interval 311-346 (AEKSKSGVGLEMDEEESEDSDDDLSWTEEEEEAMGE) is disordered. Acidic residues predominate over residues 321 to 346 (EMDEEESEDSDDDLSWTEEEEEAMGE).

As to quaternary structure, interacts with beta-1 integrin subunit. This interaction is regulated by divalent cations, and it occurs only in absence of calcium.

May play a role during maturation and/or organization of muscles cells. The polypeptide is Integrin beta-1-binding protein 2 (ITGB1BP2) (Sus scrofa (Pig)).